A 273-amino-acid chain; its full sequence is Vacuolar iron transporter (273 aa).

The Cytoplasmic portion of the chain corresponds to 1–47 (MGKQKIIDARKAYYEGDIEKSKEIHSHYHNLDKHAEHHSLDKDHLKT). A helical transmembrane segment spans residues 48–68 (IIFGSLDGIITIFAIVSGCVG). Topologically, residues 69–72 (ANIT) are vacuolar. A helical transmembrane segment spans residues 73 to 93 (PAQVIIIGVGNLFANAISMGF). Over 94–181 (SEYTSSTAQI…NEDKSEAFKK (88 aa)) the chain is Cytoplasmic. Glutamate 113, glutamate 116, glutamate 124, glutamate 127, methionine 161, and glutamate 165 together coordinate Fe cation. A helical membrane pass occupies residues 182 to 202 (GILMFLSFCFFGMIPLFSYVL). Residues 203 to 212 (YNLFFSAENY) lie on the Vacuolar side of the membrane. A helical membrane pass occupies residues 213 to 233 (TSSFAVVFISTLITLFILGLF). The Cytoplasmic portion of the chain corresponds to 234-246 (KSQFTTQKPIVCA). Residues 247–267 (LSMVLNGSIAGMLPFLFGVLL) form a helical membrane-spanning segment. Residues 268–273 (KTNSGD) are Vacuolar-facing.

The protein belongs to the CCC1 family. As to quaternary structure, monomer.

It is found in the vacuole membrane. Its subcellular location is the endoplasmic reticulum membrane. It catalyses the reaction Fe(2+)(in) = Fe(2+)(out). Vacuolar iron transporter involved in the transfer of iron ions from the cytosol to the vacuole for intracellular iron storage. Involved in detoxification of excess iron. The transport mechanism is not well defined and the role of protons is not clear. This is Vacuolar iron transporter from Plasmodium berghei (strain Anka).